We begin with the raw amino-acid sequence, 628 residues long: MEKINYEEVGLKVGLEIHRQLDTKKLFSPVPSKLSDDVDFTFKRRLRPTMSELGEIDPAALEEFKKGRTYIYEANNELGDLVYMDEEPPRGPDEEALEVALQIAYLLNAKPVDEVYYMRKIVIDGSNVSGFQRTAIIATDGKVETPWGTVGIPTICLEEDAARIIETRDREVIYRIDRLGIPLVEISTTPDIHHPEQAKVVAKFIGDALRATRKVKRGLGTIRQDLNVSIKGGARIEIKGVQELDMIPVIIEREVQRQLNLLKIRDELRKRGVTPEDIKEEFYDVTDIFKDTKSKIIARILKKGGKVLAIKLPKFKGLIGMEIQPGRRLGTEFADRAKKYVPGIFHSDELPNYGITQEEVEKVRKLLELEEEDAFVLVAAQEEIAKKALKEVIIRAREAIIGVPEETRRALPDGNTQYMRPLPGKARMYPETDIPPIRITEEMKRRIKENLPELPQAKVEKYVKEFGIDKSMAQTIVDDERDELFEELIEMGVKPSLAASILAVVLKGLRKEVPIENITEEHIKGAFRLYLEGKIAKEAFEEIFKELAQHPEKTAEEVAQEKGLTLLSEEEVRKIVDEVVNQYIDVIKEKGMGAMGLIMGRVMTKVRGKADGKLVSQIVKEKIREISG.

The protein belongs to the GatB/GatE family. GatE subfamily. In terms of assembly, heterodimer of GatD and GatE.

It catalyses the reaction L-glutamyl-tRNA(Gln) + L-glutamine + ATP + H2O = L-glutaminyl-tRNA(Gln) + L-glutamate + ADP + phosphate + H(+). In terms of biological role, allows the formation of correctly charged Gln-tRNA(Gln) through the transamidation of misacylated Glu-tRNA(Gln) in organisms which lack glutaminyl-tRNA synthetase. The reaction takes place in the presence of glutamine and ATP through an activated gamma-phospho-Glu-tRNA(Gln). The GatDE system is specific for glutamate and does not act on aspartate. This is Glutamyl-tRNA(Gln) amidotransferase subunit E from Pyrococcus furiosus (strain ATCC 43587 / DSM 3638 / JCM 8422 / Vc1).